The following is a 311-amino-acid chain: Malate dehydrogenase (311 aa).

NAD(+) contacts are provided by residues 7–13 and Asp-34; that span reads GAAGGIG. Residues Arg-81 and Arg-87 each contribute to the substrate site. NAD(+) contacts are provided by residues Asn-94 and 117-119; that span reads ITN. Residues Asn-119 and Arg-153 each contribute to the substrate site. His-177 serves as the catalytic Proton acceptor. An NAD(+)-binding site is contributed by Met-227.

The protein belongs to the LDH/MDH superfamily. MDH type 1 family. As to quaternary structure, homodimer.

The enzyme catalyses (S)-malate + NAD(+) = oxaloacetate + NADH + H(+). Catalyzes the reversible oxidation of malate to oxaloacetate. This Aeromonas hydrophila subsp. hydrophila (strain ATCC 7966 / DSM 30187 / BCRC 13018 / CCUG 14551 / JCM 1027 / KCTC 2358 / NCIMB 9240 / NCTC 8049) protein is Malate dehydrogenase.